A 140-amino-acid chain; its full sequence is Sex-regulated protein janus-B (140 aa).

Position 42 (Arg42) interacts with substrate. The active-site Proton acceptor is the His69. Ser110 to Thr112 contributes to the substrate binding site.

Belongs to the janus family.

Functionally, janA and janB regulate somatic sex differentiation. The chain is Sex-regulated protein janus-B (janB) from Drosophila erecta (Fruit fly).